The primary structure comprises 428 residues: Zinc metalloproteinase nas-27 (428 aa).

Residues 1–17 form the signal peptide; that stretch reads MQILPIFFPLLITSLHA. Residues 18 to 57 constitute a propeptide that is removed on maturation; the sequence is IPRGRRAVRNRNEGDINSLVGVGQYLYQGDIAVVKSRARR. Positions 58–255 constitute a Peptidase M12A domain; sequence AVIRQKHKKW…SRMNVLYNCH (198 aa). Intrachain disulfides connect cysteine 99–cysteine 254, cysteine 120–cysteine 141, cysteine 258–cysteine 276, cysteine 281–cysteine 290, cysteine 306–cysteine 339, and cysteine 366–cysteine 386. Histidine 150 is a Zn(2+) binding site. Glutamate 151 is an active-site residue. Residues histidine 154 and histidine 160 each coordinate Zn(2+). An N-linked (GlcNAc...) asparagine glycan is attached at asparagine 181. In terms of domain architecture, EGF-like spans 250 to 291; that stretch reads VLYNCHERCANTLNRCQQGGYPAPSDCSQCVCPDGFGGNFCE. A CUB domain is found at 306-428; that stretch reads CGGVLWASET…LDFNIEYRAV (123 aa). N-linked (GlcNAc...) asparagine glycosylation is present at asparagine 377.

Zn(2+) is required as a cofactor.

The protein resides in the secreted. Its function is as follows. Metalloprotease. The protein is Zinc metalloproteinase nas-27 (nas-27) of Caenorhabditis elegans.